The sequence spans 280 residues: UDP-3-O-acyl-N-acetylglucosamine deacetylase (280 aa).

Residues His77, His238, and Asp242 each contribute to the Zn(2+) site. The active-site Proton donor is the His265.

It belongs to the LpxC family. Zn(2+) is required as a cofactor.

It catalyses the reaction a UDP-3-O-[(3R)-3-hydroxyacyl]-N-acetyl-alpha-D-glucosamine + H2O = a UDP-3-O-[(3R)-3-hydroxyacyl]-alpha-D-glucosamine + acetate. It functions in the pathway glycolipid biosynthesis; lipid IV(A) biosynthesis; lipid IV(A) from (3R)-3-hydroxytetradecanoyl-[acyl-carrier-protein] and UDP-N-acetyl-alpha-D-glucosamine: step 2/6. Its function is as follows. Catalyzes the hydrolysis of UDP-3-O-myristoyl-N-acetylglucosamine to form UDP-3-O-myristoylglucosamine and acetate, the committed step in lipid A biosynthesis. In Nostoc sp. (strain PCC 7120 / SAG 25.82 / UTEX 2576), this protein is UDP-3-O-acyl-N-acetylglucosamine deacetylase.